Consider the following 210-residue polypeptide: Uracil phosphoribosyltransferase (210 aa).

5-phospho-alpha-D-ribose 1-diphosphate is bound by residues R80, R105, and 132–140 (DPMLATGGS). Uracil-binding positions include I195 and 200–202 (GDA). Residue D201 participates in 5-phospho-alpha-D-ribose 1-diphosphate binding.

The protein belongs to the UPRTase family. The cofactor is Mg(2+).

The enzyme catalyses UMP + diphosphate = 5-phospho-alpha-D-ribose 1-diphosphate + uracil. The protein operates within pyrimidine metabolism; UMP biosynthesis via salvage pathway; UMP from uracil: step 1/1. With respect to regulation, allosterically activated by GTP. Its function is as follows. Catalyzes the conversion of uracil and 5-phospho-alpha-D-ribose 1-diphosphate (PRPP) to UMP and diphosphate. In Thermoanaerobacter pseudethanolicus (strain ATCC 33223 / 39E) (Clostridium thermohydrosulfuricum), this protein is Uracil phosphoribosyltransferase.